A 286-amino-acid polypeptide reads, in one-letter code: Ribosome-inactivating protein momordin I (286 aa).

The signal sequence occupies residues methionine 1–glycine 23. Glutamate 183 is an active-site residue. N-linked (GlcNAc...) asparagine glycosylation occurs at asparagine 250. Residues alanine 270–tyrosine 286 constitute a propeptide, removed in mature form.

The protein belongs to the ribosome-inactivating protein family. Type 1 RIP subfamily.

The catalysed reaction is Endohydrolysis of the N-glycosidic bond at one specific adenosine on the 28S rRNA.. The protein is Ribosome-inactivating protein momordin I of Momordica charantia (Bitter gourd).